The sequence spans 513 residues: Glycerol-3-phosphate dehydrogenase (513 aa).

An FAD-binding site is contributed by 16–44 (DVAVIGGGINGVGIAADAAGRGLSVFLCE).

It belongs to the FAD-dependent glycerol-3-phosphate dehydrogenase family. FAD is required as a cofactor.

The protein localises to the cytoplasm. It carries out the reaction a quinone + sn-glycerol 3-phosphate = dihydroxyacetone phosphate + a quinol. The sequence is that of Glycerol-3-phosphate dehydrogenase (glpD) from Pseudomonas tolaasii.